Reading from the N-terminus, the 212-residue chain is Thiamine-phosphate synthase (212 aa).

Residues 40-44 and Asn-75 contribute to the 4-amino-2-methyl-5-(diphosphooxymethyl)pyrimidine site; that span reads QFREK. Asp-76 and Asp-95 together coordinate Mg(2+). Ser-113 is a binding site for 4-amino-2-methyl-5-(diphosphooxymethyl)pyrimidine. 139 to 141 contacts 2-[(2R,5Z)-2-carboxy-4-methylthiazol-5(2H)-ylidene]ethyl phosphate; the sequence is TIS. Lys-142 lines the 4-amino-2-methyl-5-(diphosphooxymethyl)pyrimidine pocket. 2-[(2R,5Z)-2-carboxy-4-methylthiazol-5(2H)-ylidene]ethyl phosphate-binding positions include Gly-171 and 191-192; that span reads IS.

Belongs to the thiamine-phosphate synthase family. It depends on Mg(2+) as a cofactor.

It carries out the reaction 2-[(2R,5Z)-2-carboxy-4-methylthiazol-5(2H)-ylidene]ethyl phosphate + 4-amino-2-methyl-5-(diphosphooxymethyl)pyrimidine + 2 H(+) = thiamine phosphate + CO2 + diphosphate. It catalyses the reaction 2-(2-carboxy-4-methylthiazol-5-yl)ethyl phosphate + 4-amino-2-methyl-5-(diphosphooxymethyl)pyrimidine + 2 H(+) = thiamine phosphate + CO2 + diphosphate. The catalysed reaction is 4-methyl-5-(2-phosphooxyethyl)-thiazole + 4-amino-2-methyl-5-(diphosphooxymethyl)pyrimidine + H(+) = thiamine phosphate + diphosphate. It functions in the pathway cofactor biosynthesis; thiamine diphosphate biosynthesis; thiamine phosphate from 4-amino-2-methyl-5-diphosphomethylpyrimidine and 4-methyl-5-(2-phosphoethyl)-thiazole: step 1/1. Its function is as follows. Condenses 4-methyl-5-(beta-hydroxyethyl)thiazole monophosphate (THZ-P) and 2-methyl-4-amino-5-hydroxymethyl pyrimidine pyrophosphate (HMP-PP) to form thiamine monophosphate (TMP). The polypeptide is Thiamine-phosphate synthase (Staphylococcus haemolyticus (strain JCSC1435)).